Consider the following 941-residue polypeptide: Glycine dehydrogenase (decarboxylating) (941 aa).

The residue at position 692 (lysine 692) is an N6-(pyridoxal phosphate)lysine.

It belongs to the GcvP family. As to quaternary structure, the glycine cleavage system is composed of four proteins: P, T, L and H. The cofactor is pyridoxal 5'-phosphate.

The catalysed reaction is N(6)-[(R)-lipoyl]-L-lysyl-[glycine-cleavage complex H protein] + glycine + H(+) = N(6)-[(R)-S(8)-aminomethyldihydrolipoyl]-L-lysyl-[glycine-cleavage complex H protein] + CO2. The glycine cleavage system catalyzes the degradation of glycine. The P protein binds the alpha-amino group of glycine through its pyridoxal phosphate cofactor; CO(2) is released and the remaining methylamine moiety is then transferred to the lipoamide cofactor of the H protein. This chain is Glycine dehydrogenase (decarboxylating), found in Mycobacterium avium (strain 104).